The sequence spans 120 residues: Ribosome-binding factor A (120 aa).

Belongs to the RbfA family. In terms of assembly, monomer. Binds 30S ribosomal subunits, but not 50S ribosomal subunits or 70S ribosomes.

The protein localises to the cytoplasm. Its function is as follows. One of several proteins that assist in the late maturation steps of the functional core of the 30S ribosomal subunit. Associates with free 30S ribosomal subunits (but not with 30S subunits that are part of 70S ribosomes or polysomes). Required for efficient processing of 16S rRNA. May interact with the 5'-terminal helix region of 16S rRNA. This is Ribosome-binding factor A from Campylobacter jejuni subsp. jejuni serotype O:6 (strain 81116 / NCTC 11828).